The primary structure comprises 219 residues: Non-specific lipid transfer protein GPI-anchored 25 (219 aa).

Positions 1 to 22 (MATKITGVFILILTITFSSSSA) are cleaved as a signal peptide. Disulfide bonds link Cys-39–Cys-85, Cys-49–Cys-68, Cys-69–Cys-110, and Cys-83–Cys-123. N-linked (GlcNAc...) asparagine glycosylation is present at Asn-59. An N-linked (GlcNAc...) asparagine glycan is attached at Asn-148. Residues 152–181 (SPQSVDLAPEVSPSSDLFSPETATLAPPPP) form a disordered region. Residue Ser-192 is the site of GPI-anchor amidated serine attachment. The propeptide at 193–219 (SDSLKIRNFWFPSTIIMTFATSILARI) is removed in mature form.

This sequence belongs to the plant LTP family.

The protein resides in the cell membrane. Its function is as follows. Probable lipid transfer protein. The protein is Non-specific lipid transfer protein GPI-anchored 25 of Arabidopsis thaliana (Mouse-ear cress).